Reading from the N-terminus, the 232-residue chain is 7-cyano-7-deazaguanine synthase (232 aa).

An ATP-binding site is contributed by 8-18 (FSGGQDSTTCL). Zn(2+)-binding residues include C188, C197, C200, and C203.

This sequence belongs to the QueC family. The cofactor is Zn(2+).

The catalysed reaction is 7-carboxy-7-deazaguanine + NH4(+) + ATP = 7-cyano-7-deazaguanine + ADP + phosphate + H2O + H(+). Its pathway is purine metabolism; 7-cyano-7-deazaguanine biosynthesis. Functionally, catalyzes the ATP-dependent conversion of 7-carboxy-7-deazaguanine (CDG) to 7-cyano-7-deazaguanine (preQ(0)). The sequence is that of 7-cyano-7-deazaguanine synthase from Buchnera aphidicola subsp. Schizaphis graminum (strain Sg).